Reading from the N-terminus, the 898-residue chain is MITMSHQLEKLGYRKYECRSCGNTFWSMKERATCGDAPCDEYGFIGNPATDRSYDLYEIQDKFMEFFAERGHEPIRRYPVLAKRWRDDVFLVGASIYNFQPWVTSGLVKPPANPLVVAQPSIRLNDVDNVGRTGRHLTCFTMGGHHAFNSEDNTVYWEEETIKYCHDFLTHIGIDPSEITFIESWWQGGGNEGPCYEVCVRGVELATLVFIQYRTLPDGGREEIPLKIVDTGYGLERFAWISQGTPTAYDACLGPVIEKLVELTGVKIDEEILAENAQVAGMMDIETYADLRELRKRVADKLGISVEELERAAAPMESVYAIADHTRCLAFMLADGVIPSNVKEGYLARLIIRRTLRLMKDLGMKESLKDIMNIQVEFLEGHYPEIRSHHEHILNIIDLEEHRYARTVKRGRRIVEKTIKYLKRDGKAEMPLEILIKLYDSHGIPPETIGEIAEESGFQVKIPDNFYTLVAERNETETEMPEEDVHLDYPATELLFYDEPDDLEFQAEVIGIHENGLILDRTLFYPEGGGQPSDTGYITAEGCRLRIKHAEKIGAVVVHRTDDEICIEPGTTIRGFIDSDRRLQLTRNHTATHLIVSAARKVLGDHIWQAGAQKGVKSSRLDLSHYRRITLEELQEIERLANEYVMMNVPLKVRWMDRDLAERKYGFILYQGGVVPGSRIRVVEIPGVDVQACAGTHVHRTGDIGLIRINRTERIQDGVERIEFSAGSAAIEIMQKTGDILRESSDIFKVTPSQLPGTCERFFTEWKALRNEVSRLKEKVASLKILEMKDRAERINDLTVIIDTVDADMDEMKNMALELSATVDAVVLANPEGKIVGAASEDAVKAGLRINEVISQAAAVLGGGGGGRPHLAQGAGPATDKVDEALEEARAALSTVRN.

Zn(2+) is bound by residues H589, H593, C693, and H697.

The protein belongs to the class-II aminoacyl-tRNA synthetase family. The cofactor is Zn(2+).

The protein resides in the cytoplasm. The enzyme catalyses tRNA(Ala) + L-alanine + ATP = L-alanyl-tRNA(Ala) + AMP + diphosphate. Its function is as follows. Catalyzes the attachment of alanine to tRNA(Ala) in a two-step reaction: alanine is first activated by ATP to form Ala-AMP and then transferred to the acceptor end of tRNA(Ala). Also edits incorrectly charged Ser-tRNA(Ala) and Gly-tRNA(Ala) via its editing domain. The chain is Alanine--tRNA ligase from Methanothermobacter thermautotrophicus (strain ATCC 29096 / DSM 1053 / JCM 10044 / NBRC 100330 / Delta H) (Methanobacterium thermoautotrophicum).